Here is a 122-residue protein sequence, read N- to C-terminus: Ribosome-binding factor A (122 aa).

Belongs to the RbfA family. In terms of assembly, monomer. Binds 30S ribosomal subunits, but not 50S ribosomal subunits or 70S ribosomes.

The protein resides in the cytoplasm. In terms of biological role, one of several proteins that assist in the late maturation steps of the functional core of the 30S ribosomal subunit. Associates with free 30S ribosomal subunits (but not with 30S subunits that are part of 70S ribosomes or polysomes). Required for efficient processing of 16S rRNA. May interact with the 5'-terminal helix region of 16S rRNA. In Pelagibacter ubique (strain HTCC1062), this protein is Ribosome-binding factor A.